The sequence spans 393 residues: Sex hormone-binding globulin (393 aa).

Residues 1 to 27 (MEGRGPLATSPRRRWLLLLLLLPHSHQ) form the signal peptide. Laminin G-like domains follow at residues 35–208 (VHLS…PRSC) and 215–381 (GSFF…THSC). 2 cysteine pairs are disulfide-bonded: C183/C208 and C353/C381. N-linked (GlcNAc...) asparagine glycans are attached at residues N371 and N387.

Homodimer.

The protein localises to the secreted. Its function is as follows. Functions as an androgen transport protein, but may also be involved in receptor mediated processes. Each dimer binds one molecule of steroid. Specific for 5-alpha-dihydrotestosterone, testosterone, and 17-beta-estradiol. Regulates the plasma metabolic clearance rate of steroid hormones by controlling their plasma concentration. The polypeptide is Sex hormone-binding globulin (SHBG) (Crocuta crocuta (Spotted hyena)).